Here is a 283-residue protein sequence, read N- to C-terminus: Large ribosomal subunit protein uL2c (283 aa).

The disordered stretch occupies residues 229 to 274 (GVVMNPIDHPHGGGEGKVPIGRKKPLTPWGHPALGRKSRKRRKYSD). Basic residues predominate over residues 262-271 (LGRKSRKRRK).

The protein belongs to the universal ribosomal protein uL2 family. In terms of assembly, part of the 50S ribosomal subunit.

Its subcellular location is the plastid. This Aneura mirabilis (Parasitic liverwort) protein is Large ribosomal subunit protein uL2c (rpl2).